A 659-amino-acid chain; its full sequence is Threonine--tRNA ligase (659 aa).

Residues 3–64 (EKIRITLIDN…LEDGRLEIIT (62 aa)) enclose the TGS domain. The tract at residues 249–555 (DHRRLGQEMD…LIEHHAGRFP (307 aa)) is catalytic. Cys-354, His-405, and His-532 together coordinate Zn(2+).

This sequence belongs to the class-II aminoacyl-tRNA synthetase family. In terms of assembly, homodimer. Zn(2+) is required as a cofactor.

Its subcellular location is the cytoplasm. The enzyme catalyses tRNA(Thr) + L-threonine + ATP = L-threonyl-tRNA(Thr) + AMP + diphosphate + H(+). In terms of biological role, catalyzes the attachment of threonine to tRNA(Thr) in a two-step reaction: L-threonine is first activated by ATP to form Thr-AMP and then transferred to the acceptor end of tRNA(Thr). Also edits incorrectly charged L-seryl-tRNA(Thr). The sequence is that of Threonine--tRNA ligase from Zymomonas mobilis subsp. mobilis (strain ATCC 31821 / ZM4 / CP4).